The primary structure comprises 428 residues: Serine--tRNA ligase (428 aa).

231 to 233 (TAE) is an L-serine binding site. ATP is bound at residue 262 to 264 (RSE). Glu285 is a binding site for L-serine. Residue 349–352 (EISS) participates in ATP binding. Ser385 lines the L-serine pocket.

It belongs to the class-II aminoacyl-tRNA synthetase family. Type-1 seryl-tRNA synthetase subfamily. As to quaternary structure, homodimer. The tRNA molecule binds across the dimer.

The protein resides in the cytoplasm. It catalyses the reaction tRNA(Ser) + L-serine + ATP = L-seryl-tRNA(Ser) + AMP + diphosphate + H(+). The enzyme catalyses tRNA(Sec) + L-serine + ATP = L-seryl-tRNA(Sec) + AMP + diphosphate + H(+). It functions in the pathway aminoacyl-tRNA biosynthesis; selenocysteinyl-tRNA(Sec) biosynthesis; L-seryl-tRNA(Sec) from L-serine and tRNA(Sec): step 1/1. Functionally, catalyzes the attachment of serine to tRNA(Ser). Is also able to aminoacylate tRNA(Sec) with serine, to form the misacylated tRNA L-seryl-tRNA(Sec), which will be further converted into selenocysteinyl-tRNA(Sec). This Staphylococcus aureus (strain MW2) protein is Serine--tRNA ligase.